The following is a 55-amino-acid chain: Spermatid nuclear transition protein 1 (55 aa).

A compositionally biased stretch (basic residues) spans 1–42 (MSTSRKLKSHGMRRSKSRSPHKGVKRGGSKRKYRKGNLKSRK). Residues 1-55 (MSTSRKLKSHGMRRSKSRSPHKGVKRGGSKRKYRKGNLKSRKRGDDANRNYRSHL) form a disordered region. Ser-9 and Ser-40 each carry phosphoserine.

It belongs to the nuclear transition protein 1 family. As to expression, expressed by spermatids (at protein level).

It is found in the nucleus. Its subcellular location is the chromosome. In terms of biological role, plays a key role in the replacement of histones to protamine in the elongating spermatids of mammals. In condensing spermatids, loaded onto the nucleosomes, where it promotes the recruitment and processing of protamines, which are responsible for histone eviction. In Homo sapiens (Human), this protein is Spermatid nuclear transition protein 1 (TNP1).